A 330-amino-acid chain; its full sequence is Probable aldo-keto reductase 6 (330 aa).

Residue Y64 is the Proton donor of the active site. H132 provides a ligand contact to substrate. 211-221 (SPLGRGFLGLP) serves as a coordination point for NADP(+).

The protein belongs to the aldo/keto reductase family.

The protein is Probable aldo-keto reductase 6 of Arabidopsis thaliana (Mouse-ear cress).